The primary structure comprises 207 residues: High frequency lysogenization protein HflD homolog (207 aa).

This sequence belongs to the HflD family.

The protein localises to the cytoplasm. It localises to the cell inner membrane. The sequence is that of High frequency lysogenization protein HflD homolog from Methylococcus capsulatus (strain ATCC 33009 / NCIMB 11132 / Bath).